Consider the following 3470-residue polypeptide: Dynein axonemal heavy chain 5 (3470 aa).

The stem stretch occupies residues 1-1938 (MFRIGRRQLW…MIHITDVAFT (1938 aa)). A disordered region spans residues 899 to 918 (EKVRHENASPNGDTSGGGEG). AAA regions lie at residues 1939 to 2161 (YQNE…VLRT), 2221 to 2440 (TAIS…IQNL), 2547 to 2800 (VYPP…IWQG), and 2913 to 3167 (LYNE…FRRS). Residues 1977–1984 (GPAGTGKT) and 2259–2266 (GPSGSGKT) each bind ATP. 2 coiled-coil regions span residues 3207–3241 (LKEA…VLKE) and 3434–3468 (HALA…AMTE).

This sequence belongs to the dynein heavy chain family. Interacts with DNAL1. Consists of at least two heavy chains and a number of intermediate and light chains.

It localises to the cytoplasm. It is found in the cytoskeleton. The protein localises to the cilium axoneme. In terms of biological role, force generating protein of respiratory cilia. Produces force towards the minus ends of microtubules. Dynein has ATPase activity; the force-producing power stroke is thought to occur on release of ADP. Required for structural and functional integrity of the cilia of ependymal cells lining the brain ventricles. The polypeptide is Dynein axonemal heavy chain 5 (Rattus norvegicus (Rat)).